A 608-amino-acid polypeptide reads, in one-letter code: Nuclear protein localization protein 4 homolog (608 aa).

An N-acetylalanine modification is found at A2. K179 carries the post-translational modification N6-acetyllysine. Residues I226 to F363 enclose the MPN domain. A RanBP2-type zinc finger spans residues T580 to T608.

This sequence belongs to the NPL4 family. As to quaternary structure, heterodimer with UFD1. The heterodimer binds ubiquitinated proteins. The heterodimer binds to VCP and inhibits Golgi membrane fusion. Interacts with ZFAND2B; probably through VCP. As to expression, expressed at highest levels in brain, heart, skeletal muscle, kidney and fetal liver.

The protein localises to the cytoplasm. It is found in the cytosol. It localises to the endoplasmic reticulum. Its subcellular location is the nucleus. Its pathway is protein degradation; proteasomal ubiquitin-dependent pathway. Its function is as follows. The ternary complex containing UFD1, VCP and NPLOC4 binds ubiquitinated proteins and is necessary for the export of misfolded proteins from the ER to the cytoplasm, where they are degraded by the proteasome. The NPLOC4-UFD1-VCP complex regulates spindle disassembly at the end of mitosis and is necessary for the formation of a closed nuclear envelope. Acts as a negative regulator of type I interferon production via the complex formed with VCP and UFD1, which binds to RIGI and recruits RNF125 to promote ubiquitination and degradation of RIGI. The chain is Nuclear protein localization protein 4 homolog (NPLOC4) from Homo sapiens (Human).